The following is a 306-amino-acid chain: Myb family transcription factor MOF1 (306 aa).

The 61-residue stretch at 19-79 (RSKVPRLRWT…HLQMYRCSRL (61 aa)) folds into the HTH myb-type domain. Positions 50–75 (PKLILQLMGVKGLTISHVKSHLQMYR) form a DNA-binding region, H-T-H motif.

Interacts with TPR1, TPR2 and TPR3. Expressed in roots, leaves, leaf sheaths, culms, panicles, lemmas, paleas, lodicules, stamens, and pistils.

The protein resides in the nucleus. In terms of biological role, transcriptional repressor that plays a role in the regulation of organ identity and spikelet meristem determinacy. Interacts with the TPR corepressors to possibly repress the expression of downstream target genes. This is Myb family transcription factor MOF1 from Oryza sativa subsp. japonica (Rice).